The chain runs to 362 residues: Sulfate/thiosulfate import ATP-binding protein CysA (362 aa).

In terms of domain architecture, ABC transporter spans 3–237 (IEINNISKYF…PASRFVMEFL (235 aa)). 35 to 42 (GPSGSGKT) contributes to the ATP binding site.

The protein belongs to the ABC transporter superfamily. Sulfate/tungstate importer (TC 3.A.1.6) family. The complex is composed of two ATP-binding proteins (CysA), two transmembrane proteins (CysT and CysW) and a solute-binding protein (CysP).

Its subcellular location is the cell inner membrane. It carries out the reaction sulfate(out) + ATP + H2O = sulfate(in) + ADP + phosphate + H(+). It catalyses the reaction thiosulfate(out) + ATP + H2O = thiosulfate(in) + ADP + phosphate + H(+). Its function is as follows. Part of the ABC transporter complex CysAWTP involved in sulfate/thiosulfate import. Responsible for energy coupling to the transport system. The chain is Sulfate/thiosulfate import ATP-binding protein CysA from Photorhabdus laumondii subsp. laumondii (strain DSM 15139 / CIP 105565 / TT01) (Photorhabdus luminescens subsp. laumondii).